Reading from the N-terminus, the 464-residue chain is Propanal dehydrogenase (CoA-propanoylating) (464 aa).

The segment at 1 to 18 (MNTSELETLIRTILSEQL) is targets protein to the BMC.

This sequence belongs to the EutE/PduP family. As to quaternary structure, interacts with BMC shell proteins PduA and PduJ, which target this protein to BMC. Interacts with PduQ, probably via the N-terminus of PduQ. Interacts with PduK, probably with its BMC-containing N-terminus.

It localises to the bacterial microcompartment. The enzyme catalyses propanal + NAD(+) + CoA = propanoyl-CoA + NADH + H(+). The protein operates within polyol metabolism; 1,2-propanediol degradation. Functionally, a CoA-acylating aldehyde dehydrogenase required for optimal 1,2-propanediol (1,2-PD) degradation. Optimizes growth in the bacterial microcompartment (BMC) dedicated to 1,2-PD degradation by minimizing propionaldehyde toxicity. Directly targeted to the BMC. NAD(+) and NADH are regenerated internally within the Pdu BMC by the PduP and PduQ enzymes, which reduce NAD(+) and oxidize NADH respectively, although there must also be cofactor transport across the BMC. Its function is as follows. The 1,2-PD-specific bacterial microcompartment (BMC) concentrates low levels of 1,2-PD catabolic enzymes, concentrates volatile reaction intermediates thus enhancing pathway flux and keeps the level of toxic, mutagenic propionaldehyde low. This Salmonella typhimurium (strain LT2 / SGSC1412 / ATCC 700720) protein is Propanal dehydrogenase (CoA-propanoylating).